Here is a 283-residue protein sequence, read N- to C-terminus: uncharacterized protein (283 aa).

6 consecutive transmembrane segments (helical) span residues 28-48, 65-85, 113-133, 135-155, 200-220, and 246-266; these read LSSTSGAIGAIFGIILSILLI, LTSLIVASFGFLIALIIGFIL, LKRGFLYWIGNIILSIIFMIV, ILFIIFGVFLIFLPLVGIVFI, LNYIILLIIVGVIVIVINFVV, and IVDVISAVISAFVGFYTAVFA.

It to M.jannaschii MJ0233.

The protein localises to the cell membrane. This is an uncharacterized protein from Methanocaldococcus jannaschii (strain ATCC 43067 / DSM 2661 / JAL-1 / JCM 10045 / NBRC 100440) (Methanococcus jannaschii).